A 509-amino-acid polypeptide reads, in one-letter code: Putative ATP-dependent RNA helicase QP509L (509 aa).

Residues Lys-110 to Pro-262 enclose the Helicase ATP-binding domain. Leu-123–Thr-130 contributes to the ATP binding site. The DEAH box signature appears at Asp-215–His-218.

It belongs to the DEAD box helicase family. DEAH subfamily.

It catalyses the reaction ATP + H2O = ADP + phosphate + H(+). This is Putative ATP-dependent RNA helicase QP509L from African swine fever virus (isolate Tick/Malawi/Lil 20-1/1983) (ASFV).